Here is a 450-residue protein sequence, read N- to C-terminus: Caspase Dronc (450 aa).

A propeptide spanning residues 1–134 (MQPPELEIGM…RTSRKSADIV (134 aa)) is cleaved from the precursor. The 46-residue stretch at 64 to 109 (EKDVRVEQHRRLLLKITQRGPTAYNLLINALRNINCLDAAVLLESV) folds into the CARD domain. The segment at 114-125 (SRPPFISLNERR) is required for binding Diap1. Residues His-271 and Cys-318 contribute to the active site. Positions 321–324 (DEYD) are excised as a propeptide.

Belongs to the peptidase C14A family. As to quaternary structure, interacts (via residues 114-125) with Diap1 (via BIR 2 domain); binding blocks Dronc-mediated cell death. Can form a stable complex with Drice. Rpr, hid and grim can out-compete Dronc for binding Diap1, therefore removing Diap1-mediated ubiquitination. Interacts (via CARD domain) with Dark (via Dark CARD and WD domains); the interaction stimulates Dark oligomerization to form the apoptosome and brings pairs of Dronc molecules together on the apoptosome to facilitate their dimerization and activation by autocatalytic cleavage. Binding to Dark stimulates apoptosome assembly. After autocatalytic cleavage the Dronc caspase domain dissociates from the apoptosome but the CARD domain remains associated. Post-translationally, ubiquitinated by Diap1, leading to its subsequent degradation. Ubiquitously expressed in embryos during early stages of development. In late third instar larvae, dramatic up-regulation in salivary glands and midgut before histolysis of these tissues.

The protein resides in the cytoplasm. It catalyses the reaction Strict requirement for an Asp residue at position P1 and with a marked preference for His at position P2. It has a preferred cleavage sequence of Leu-Gly-His-Asp-|-Xaa.. Its activity is regulated as follows. Zymogen activated by autocatalytic cleavage; association with the Dark apoptosome brings multiple molecules together to facilitate their dimerization and activation by autocatalytic cleavage. Functionally, involved in the activation cascade of caspases responsible for apoptosis execution. Effector of steroid-mediated apoptosis during insect metamorphosis. Overexpression promotes programmed cell death. Interaction with Diap1 is required to suppress Dronc-mediated cell death; via Diap1-mediated ubiquitination of Dronc. Rate-limiting caspase in rpr, grim and hid death pathway. Recruited to the Dark apoptosome, an adapter protein complex that mediates activation of the caspase cascade in programmed cell death initiated by the intrinsic apoptosis pathway. Association with the Dark apoptosome stimulates autocatalytic cleavage and activation of Dronc, promoting Dronc-mediated cleavage of downstream effector caspases such as Drice. The polypeptide is Caspase Dronc (Drosophila melanogaster (Fruit fly)).